We begin with the raw amino-acid sequence, 435 residues long: Citrate synthase (435 aa).

Catalysis depends on residues His-311 and Asp-370.

Belongs to the citrate synthase family.

The enzyme catalyses oxaloacetate + acetyl-CoA + H2O = citrate + CoA + H(+). It functions in the pathway carbohydrate metabolism; tricarboxylic acid cycle; isocitrate from oxaloacetate: step 1/2. This is Citrate synthase (gltA) from Rickettsia bellii (strain RML369-C).